The chain runs to 286 residues: Undecaprenyl-diphosphatase (286 aa).

7 consecutive transmembrane segments (helical) span residues 50–70 (GAAFTAITQLGTETAVIVYFW), 97–117 (MGWLVILGSLPIIVLGLIFQD), 126–146 (LWIVATMLIVFGLILAVADAV), 156–176 (LTYKHGIFYGFAQAMALIPGV), 200–220 (SFLLAIPAVFGSGLYQLYKVM), 236–256 (LATLIAFVVGYVIIGWFLKFV), and 264–284 (FVWYRIFLGLALYLLLGFNVI).

This sequence belongs to the UppP family.

It is found in the cell membrane. The enzyme catalyses di-trans,octa-cis-undecaprenyl diphosphate + H2O = di-trans,octa-cis-undecaprenyl phosphate + phosphate + H(+). Catalyzes the dephosphorylation of undecaprenyl diphosphate (UPP). Confers resistance to bacitracin. In Arthrobacter sp. (strain FB24), this protein is Undecaprenyl-diphosphatase.